The sequence spans 354 residues: Serum paraoxonase/lactonase 3 (354 aa).

Asparagine 29 carries N-linked (GlcNAc...) asparagine glycosylation. Cysteines 42 and 352 form a disulfide. 2 residues coordinate Ca(2+): glutamate 53 and aspartate 54. The active-site Proton acceptor is histidine 114. A Ca(2+)-binding site is contributed by isoleucine 116. Phosphoserine is present on serine 165. The Ca(2+) site is built by asparagine 167, aspartate 168, asparagine 223, aspartate 268, and asparagine 269. Asparagine 269 and asparagine 323 each carry an N-linked (GlcNAc...) asparagine glycan.

It belongs to the paraoxonase family. In terms of assembly, homodimer. The cofactor is Ca(2+). In terms of processing, the signal sequence is not cleaved.

It is found in the secreted. The protein localises to the extracellular space. The catalysed reaction is a phenyl acetate + H2O = a phenol + acetate + H(+). The enzyme catalyses An aryl dialkyl phosphate + H2O = dialkyl phosphate + an aryl alcohol.. It catalyses the reaction an N-acyl-L-homoserine lactone + H2O = an N-acyl-L-homoserine + H(+). In terms of biological role, has low activity towards the organophosphate paraxon and aromatic carboxylic acid esters. Rapidly hydrolyzes lactones such as statin prodrugs (e.g. lovastatin). Hydrolyzes aromatic lactones and 5- or 6-member ring lactones with aliphatic substituents but not simple lactones or those with polar substituents. The protein is Serum paraoxonase/lactonase 3 (PON3) of Homo sapiens (Human).